An 88-amino-acid polypeptide reads, in one-letter code: RQC P-site tRNA stabilizing factor (88 aa).

In terms of domain architecture, S4 RNA-binding spans 1 to 60; the sequence is MRLDKYLKVSRIIKRRTVAKEVADKGRIKVNGILAKSSTDLKVNDQVEIRFGNKLLLVKV.

Belongs to the RqcP family. Associates with stalled 50S ribosomal subunits. Binds to RqcH, 23S rRNA and the P-site tRNA. Does not require RqcH for association with 50S subunits.

Its function is as follows. Key component of the ribosome quality control system (RQC), a ribosome-associated complex that mediates the extraction of incompletely synthesized nascent chains from stalled ribosomes and their subsequent degradation. RqcH recruits Ala-charged tRNA, and with RqcP directs the elongation of stalled nascent chains on 50S ribosomal subunits, leading to non-templated C-terminal alanine extensions (Ala tail). The Ala tail promotes nascent chain degradation. RqcP is associated with the translocation-like movement of the peptidyl-tRNA from the A-site into the P-site. This is RQC P-site tRNA stabilizing factor from Streptococcus pneumoniae (strain ATCC BAA-255 / R6).